A 131-amino-acid chain; its full sequence is Small ribosomal subunit protein uS8 (131 aa).

Belongs to the universal ribosomal protein uS8 family. Part of the 30S ribosomal subunit. Contacts proteins S5 and S12.

Its function is as follows. One of the primary rRNA binding proteins, it binds directly to 16S rRNA central domain where it helps coordinate assembly of the platform of the 30S subunit. This chain is Small ribosomal subunit protein uS8, found in Campylobacter fetus subsp. fetus (strain 82-40).